The following is an 800-amino-acid chain: MGSSKKHRGEKEAAGTTAAAGTGGATEQPPRHREHKKHKHRSGGSGGSGGERRKRSRERGGERGSGRRGAEAEARSSTHGRERSQAEPSERRVKREKRDDGYEAAASSKTSSGDASSLSIEETNKLRAKLGLKPLEVNAIKKEAGTKEEPVTADVINPMALRQREELREKLAAAKEKRLLNQKLGKIKTLGEDDPWLDDTAAWIERSRQLQKEKDLAEKRAKLLEEMDQEFGVSTLVEEEFGQRRQDLYSARDLQGLTVEHAIDSFREGETMILTLKDKGVLQEEEDVLVNVNLVDKERAEKNVELRKKKPDYLPYAEDESVDDLAQQKPRSILSKYDEELEGERPHSFRLEQGGTADGLRERELEEIRAKLRLQAQSLSTVGPRLASEYLTPEEMVTFKKTKRRVKKIRKKEKEVVVRADDLLPLGDQTQDGDFGSRLRGRGRRRVSEVEEEKEPVPQPLPSDDTRVENMDISDEEEGGAPPPGSPQVLEEDEAELELQKQLEKGRRLRQLQQLQQLRDSGEKVVEIVKKLESRQRGWEEDEDPERKGAIVFNATSEFCRTLGEIPTYGLAGNREEQEELMDFERDEERSANGGSESDGEENIGWSTVNLDEEKQQQDFSASSTTILDEEPIVNRGLAAALLLCQNKGLLETTVQKVARVKAPNKSLPSAVYCIEDKMAIDDKYSRREEYRGFTQDFKEKDGYKPDVKIEYVDETGRKLTPKEAFRQLSHRFHGKGSGKMKTERRMKKLDEEALLKKMSSSDTPLGTVALLQEKQKAQKTPYIVLSGSGKSMNANTITK.

Residues 1–120 (MGSSKKHRGE…SSGDASSLSI (120 aa)) form a disordered region. Basic residues predominate over residues 32-42 (HREHKKHKHRS). Residues 58 to 101 (ERGGERGSGRRGAEAEARSSTHGRERSQAEPSERRVKREKRDDG) are compositionally biased toward basic and acidic residues. Positions 104 to 119 (AAASSKTSSGDASSLS) are enriched in low complexity. Residues Lys-125 and Lys-133 each participate in a glycyl lysine isopeptide (Lys-Gly) (interchain with G-Cter in SUMO2) cross-link. A Glycyl lysine isopeptide (Lys-Gly) (interchain with G-Cter in SUMO1); alternate cross-link involves residue Lys-141. A Glycyl lysine isopeptide (Lys-Gly) (interchain with G-Cter in SUMO2); alternate cross-link involves residue Lys-141. Glycyl lysine isopeptide (Lys-Gly) (interchain with G-Cter in SUMO2) cross-links involve residues Lys-147 and Lys-188. Residues 157–231 (NPMALRQREE…KLLEEMDQEF (75 aa)) adopt a coiled-coil conformation. Residue Thr-189 is modified to Phosphothreonine. A Glycyl lysine isopeptide (Lys-Gly) (interchain with G-Cter in SUMO2) cross-link involves residue Lys-277. Positions 311-330 (PDYLPYAEDESVDDLAQQKP) are disordered. At Ser-321 the chain carries Phosphoserine. Residues Lys-329 and Lys-336 each participate in a glycyl lysine isopeptide (Lys-Gly) (interchain with G-Cter in SUMO2) cross-link. Ser-348 carries the phosphoserine modification. At Thr-392 the chain carries Phosphothreonine. Residues Lys-400 and Lys-414 each participate in a glycyl lysine isopeptide (Lys-Gly) (interchain with G-Cter in SUMO2) cross-link. Residues 419–497 (RADDLLPLGD…QVLEEDEAEL (79 aa)) are disordered. Thr-430 carries the phosphothreonine modification. Ser-448, Ser-474, Ser-486, and Ser-521 each carry phosphoserine. The stretch at 490 to 533 (LEEDEAELELQKQLEKGRRLRQLQQLQQLRDSGEKVVEIVKKLE) forms a coiled coil. Residue Lys-548 forms a Glycyl lysine isopeptide (Lys-Gly) (interchain with G-Cter in SUMO2) linkage. The disordered stretch occupies residues 571–604 (LAGNREEQEELMDFERDEERSANGGSESDGEENI). Phosphoserine is present on residues Ser-591, Ser-596, Ser-598, and Ser-621. Residues Lys-648, Lys-657, and Lys-684 each participate in a glycyl lysine isopeptide (Lys-Gly) (interchain with G-Cter in SUMO2) cross-link. Thr-695 is modified (phosphothreonine). Glycyl lysine isopeptide (Lys-Gly) (interchain with G-Cter in SUMO2) cross-links involve residues Lys-699, Lys-709, Lys-723, Lys-749, and Lys-758. Ser-761 bears the Phosphoserine mark. Thr-764 is subject to Phosphothreonine. Glycyl lysine isopeptide (Lys-Gly) (interchain with G-Cter in SUMO2) cross-links involve residues Lys-775 and Lys-780. Ser-789 is modified (phosphoserine). Lys-791 participates in a covalent cross-link: Glycyl lysine isopeptide (Lys-Gly) (interchain with G-Cter in SUMO2).

This sequence belongs to the SNU66/SART1 family. As to quaternary structure, identified in the spliceosome C complex. Component of the U4/U6-U5 tri-snRNP complex composed of the U4, U6 and U5 snRNAs and at least PRPF3, PRPF4, PRPF6, PRPF8, PRPF31, SNRNP200, TXNL4A, SNRNP40, DDX23, CD2BP2, PPIH, SNU13, EFTUD2, SART1 and USP39. Interacts with UBL5. Interacts with IVNS1ABP (via Kelch repeats). In terms of processing, sumoylated with SUMO2. Ubiquitously expressed.

The protein localises to the nucleus. Plays a role in mRNA splicing as a component of the U4/U6-U5 tri-snRNP, one of the building blocks of the spliceosome. May also bind to DNA. The sequence is that of U4/U6.U5 tri-snRNP-associated protein 1 (SART1) from Homo sapiens (Human).